A 951-amino-acid polypeptide reads, in one-letter code: Bromodomain-containing protein 8 (951 aa).

The residue at position 85 (lysine 85) is an N6-acetyllysine. A coiled-coil region spans residues 97–171; that stretch reads VRKLTAERVE…ATDAAYQARQ (75 aa). A disordered region spans residues 161–273; that stretch reads KATDAAYQAR…TPPPSPLLSE (113 aa). The segment covering 204 to 226 has biased composition (polar residues); it reads TPTTMEEATSGVTPGTLPSTPVT. 2 positions are modified to phosphoserine: serine 456 and serine 460. A disordered region spans residues 520-547; the sequence is EENDDPQSLPGPWEHPIQQERDKPVPLP. Lysine 542 is covalently cross-linked (Glycyl lysine isopeptide (Lys-Gly) (interchain with G-Cter in SUMO2)). Lysine 554 carries the post-translational modification N6-acetyllysine; alternate. A Glycyl lysine isopeptide (Lys-Gly) (interchain with G-Cter in SUMO1); alternate cross-link involves residue lysine 554. Residue lysine 554 forms a Glycyl lysine isopeptide (Lys-Gly) (interchain with G-Cter in SUMO2); alternate linkage. Residue lysine 582 forms a Glycyl lysine isopeptide (Lys-Gly) (interchain with G-Cter in SUMO2) linkage. Residues 584–745 are disordered; sequence EPTEPEPGMS…PVSESDDGFS (162 aa). A compositionally biased stretch (basic and acidic residues) spans 610 to 622; the sequence is PELRSQDSDEEPR. Residue lysine 648 forms a Glycyl lysine isopeptide (Lys-Gly) (interchain with G-Cter in SUMO2) linkage. A Phosphoserine modification is found at serine 652. A compositionally biased stretch (basic and acidic residues) spans 673–688; the sequence is ETQHKFEMSDSLKEES. Residue lysine 685 forms a Glycyl lysine isopeptide (Lys-Gly) (interchain with G-Cter in SUMO2) linkage. Serine 694, serine 710, and serine 714 each carry phosphoserine. The region spanning 779–884 is the Bromo domain; sequence IQAQKIWKKA…RDVLEQIQQF (106 aa). A disordered region spans residues 900-922; sequence AKSLRGRDSTRKQDASEKDSVPM. Over residues 904-919 the composition is skewed to basic and acidic residues; sequence RGRDSTRKQDASEKDS.

In terms of assembly, component of the NuA4 histone acetyltransferase complex which contains the catalytic subunit KAT5/TIP60 and the subunits EP400, TRRAP/PAF400, BRD8/SMAP, EPC1, DMAP1/DNMAP1, RUVBL1/TIP49, RUVBL2, ING3, actin, ACTL6A/BAF53A, MORF4L1/MRG15, MORF4L2/MRGX, MRGBP, YEATS4/GAS41, VPS72/YL1 and MEAF6. Component of a NuA4-related complex which contains EP400, TRRAP/PAF400, SRCAP, BRD8/SMAP, EPC1, DMAP1/DNMAP1, RUVBL1/TIP49, RUVBL2, actin, ACTL6A/BAF53A, VPS72 and YEATS4/GAS41. BRD8 isoform 2 interacts with RXRA/NR2B1 and THRB/ERBA2. Component of a SWR1-like complex.

The protein localises to the nucleus. In terms of biological role, may act as a coactivator during transcriptional activation by hormone-activated nuclear receptors (NR). Stimulates transcriptional activation by AR/DHTR, ESR1/NR3A1, RXRA/NR2B1 and THRB/ERBA2. Component of the NuA4 histone acetyltransferase (HAT) complex which is involved in transcriptional activation of select genes principally by acetylation of nucleosomal histones H4 and H2A. This modification may both alter nucleosome - DNA interactions and promote interaction of the modified histones with other proteins which positively regulate transcription. This complex may be required for the activation of transcriptional programs associated with oncogene and proto-oncogene mediated growth induction, tumor suppressor mediated growth arrest and replicative senescence, apoptosis, and DNA repair. NuA4 may also play a direct role in DNA repair when recruited to sites of DNA damage. Component of a SWR1-like complex that specifically mediates the removal of histone H2A.Z/H2AZ1 from the nucleosome. This is Bromodomain-containing protein 8 (Brd8) from Mus musculus (Mouse).